A 269-amino-acid polypeptide reads, in one-letter code: Shikimate dehydrogenase (NADP(+)) (269 aa).

Residues 22-24 (TLS) and threonine 68 each bind shikimate. The active-site Proton acceptor is the lysine 72. Shikimate-binding residues include asparagine 93 and aspartate 104. NADP(+)-binding positions include 128–132 (GAGGA), 152–157 (NRTNLR), and phenylalanine 210. Tyrosine 212 contributes to the shikimate binding site. Glycine 233 is a binding site for NADP(+).

Belongs to the shikimate dehydrogenase family. As to quaternary structure, homodimer.

The catalysed reaction is shikimate + NADP(+) = 3-dehydroshikimate + NADPH + H(+). It participates in metabolic intermediate biosynthesis; chorismate biosynthesis; chorismate from D-erythrose 4-phosphate and phosphoenolpyruvate: step 4/7. Functionally, involved in the biosynthesis of the chorismate, which leads to the biosynthesis of aromatic amino acids. Catalyzes the reversible NADPH linked reduction of 3-dehydroshikimate (DHSA) to yield shikimate (SA). The polypeptide is Shikimate dehydrogenase (NADP(+)) (Saccharolobus islandicus (strain Y.N.15.51 / Yellowstone #2) (Sulfolobus islandicus)).